A 578-amino-acid polypeptide reads, in one-letter code: Suppressor of smlA (578 aa).

Involved in regulation of group size of aggregation streams. This Dictyostelium discoideum (Social amoeba) protein is Suppressor of smlA (sslA1).